Here is a 135-residue protein sequence, read N- to C-terminus: Large ribosomal subunit protein uL16c (135 aa).

It belongs to the universal ribosomal protein uL16 family. In terms of assembly, part of the 50S ribosomal subunit.

Its subcellular location is the plastid. The protein resides in the chloroplast. The protein is Large ribosomal subunit protein uL16c of Oenothera argillicola (Appalachian evening primrose).